A 319-amino-acid polypeptide reads, in one-letter code: Protoheme IX farnesyltransferase (319 aa).

Helical transmembrane passes span 34 to 54 (VMSLVVFTAFAGLVLAPGHIN), 55 to 75 (PVLGLIAILCIAVGAGASGAL), 95 to 115 (IPAGRVAPSEALAFGLVLSGF), 119 to 139 (ILGLAVNWLSAAILAFTIFFY), 155 to 175 (IVIGGAAGAFPPVIGWACVTG), 182 to 202 (VVLFLIIFLWTPAHFWALALF), 221 to 241 (VPTTKNQIVAYAVLTAIIGVV), 244 to 264 (FMGFASLGYGVVATVLGVIFV), and 291 to 311 (IFYLFAIFSALLIDRLVAVLM).

This sequence belongs to the UbiA prenyltransferase family. Protoheme IX farnesyltransferase subfamily.

It is found in the cell inner membrane. It catalyses the reaction heme b + (2E,6E)-farnesyl diphosphate + H2O = Fe(II)-heme o + diphosphate. The protein operates within porphyrin-containing compound metabolism; heme O biosynthesis; heme O from protoheme: step 1/1. Converts heme B (protoheme IX) to heme O by substitution of the vinyl group on carbon 2 of heme B porphyrin ring with a hydroxyethyl farnesyl side group. In Rhizobium rhizogenes (strain K84 / ATCC BAA-868) (Agrobacterium radiobacter), this protein is Protoheme IX farnesyltransferase.